A 655-amino-acid chain; its full sequence is Epithelial sodium channel subunit alpha (655 aa).

Residues 1-55 are Cytoplasmic-facing; that stretch reads MTDKEEEAEGGKKKEPMIGFYDSYQELFEFFCNNTTIHGTIRMVCSKHNNMKTVS. The chain crosses the membrane as a helical span at residues 56 to 76; that stretch reads WTILFITTFGVMYWQFGLLLG. Residues 77-531 are Extracellular-facing; sequence QYYSYPVSIT…SQWSLWFGSS (455 aa). Intrachain disulfides connect Cys102-Cys275, Cys199-Cys206, Cys252-Cys259, Cys364-Cys448, Cys385-Cys425, Cys385-Cys444, Cys389-Cys440, Cys398-Cys425, Cys398-Cys448, and Cys400-Cys414. Residues 532 to 552 form a helical membrane-spanning segment; it reads VLSVVEMGELVFDLIAVGVIV. The Cytoplasmic segment spans residues 553–655; sequence LRRRRREKCQ…QEASEGPTVL (103 aa). A disordered region spans residues 561–587; that stretch reads CQASSDGEGTSDSTAGTHRGQENASRS. A compositionally biased stretch (polar residues) spans 562-586; the sequence is QASSDGEGTSDSTAGTHRGQENASR.

This sequence belongs to the amiloride-sensitive sodium channel (TC 1.A.6) family. SCNN1A subfamily. Heterotrimer; containing an alpha/SCNN1A, a beta/SCNN1B and a gamma/SCNN1G subunit. In terms of tissue distribution, strongly expressed in gill, kidney and rectum (at protein level). More weakly expressed in muscle, brain, heart, liver and intestine.

It is found in the apical cell membrane. The protein resides in the cell projection. It localises to the cilium. Its subcellular location is the cytoplasmic granule. The protein localises to the cytoplasm. It is found in the cytoplasmic vesicle. The protein resides in the secretory vesicle. It localises to the acrosome. Its subcellular location is the flagellum. The enzyme catalyses Na(+)(in) = Na(+)(out). With respect to regulation, originally identified and characterized by its inhibition by the diuretic drug amiloride. Functionally, this is one of the three pore-forming subunits of the heterotrimeric epithelial sodium channel (ENaC), a critical regulator of sodium balance and fluid homeostasis. ENaC operates in epithelial tissues, where it mediates the electrodiffusion of sodium ions from extracellular fluid through the apical membrane of cells, with water following osmotically. The protein is Epithelial sodium channel subunit alpha (scnn1a) of Neoceratodus forsteri (Australian lungfish).